Reading from the N-terminus, the 733-residue chain is Methylmalonyl-CoA mutase large subunit (733 aa).

Acidic residues predominate over residues 1-10 (MRIPEFDDIE). The tract at residues 1-22 (MRIPEFDDIELGAGGGPSGSAE) is disordered. Residues tyrosine 78, methionine 81, threonine 88, arginine 90, tyrosine 92, and serine 117 each coordinate (R)-methylmalonyl-CoA. Residues phenylalanine 120 and alanine 142 each contribute to the cob(II)alamin site. Positions 198 and 200 each coordinate (R)-methylmalonyl-CoA. 2 residues coordinate cob(II)alamin: valine 209 and arginine 210. Residues arginine 210, histidine 247, arginine 286, and serine 288 each coordinate (R)-methylmalonyl-CoA. Residues glycine 336, glutamate 373, alanine 376, glycine 612, histidine 613, aspartate 614, arginine 615, serine 658, leucine 660, glycine 689, and threonine 712 each coordinate cob(II)alamin. Residues 600-732 (RPRILVAKMG…KRLAADLGHE (133 aa)) form the B12-binding domain.

The protein belongs to the methylmalonyl-CoA mutase family. In terms of assembly, heterodimer of an alpha and a beta chain. Adenosylcob(III)alamin is required as a cofactor.

It catalyses the reaction (R)-methylmalonyl-CoA = succinyl-CoA. Its function is as follows. Catalyzes the isomerization of succinyl-CoA to methylmalonyl-CoA during synthesis of propionate from tricarboxylic acid-cycle intermediates. This conversion most likely represents an important source of building blocks for polyketide antibiotic biosynthesis. It is unable to catalyze the conversion of isobutyryl-CoA into N-butyryl-CoA. This chain is Methylmalonyl-CoA mutase large subunit (mutB), found in Streptomyces virginiae (Streptomyces cinnamonensis).